The sequence spans 440 residues: MSEFSQTVPELVAWARKNDFSISLPVDRLSFLLAVATLNGERLDGEMSEGELVDAFRHVSDAFEQTSETIGVRANNAINDMVRQRLLNRFTSEQAEGNAIYRLTPLGIGITDYYIRQREFSTLRLSMQLSIVAGELKRAADAAAEGGDEFHWHRNVYAPLKYSVAEIFDSIDLTQRIMDEQQQQVKDDIAQLLNKDWRAAISSCELLLSETSGTLRELQDTLEAAGDKLQANLLRIQDATMTHDDLHFVDRLVFDLQSKLDRIISWGQQSIDLWIGYDRHVHKFIRTAIDMDKNRVFAQRLRQSVQTYFDDPWALTYANADRLLDMRDEEMALRDDEVTGELPPDLEYEEFNEIREQLAAIIEEQLAIYKTRQTPLDLGLVVREYLAQYPRARHFDVARIVIDQAVRLGVAQADFTGLPAKWQPINDYGAKVQAHVIDKY.

A leucine-zipper region spans residues 208–236; sequence LSETSGTLRELQDTLEAAGDKLQANLLRI.

This sequence belongs to the MukF family. As to quaternary structure, interacts, and probably forms a ternary complex, with MukE and MukB via its C-terminal region. The complex formation is stimulated by calcium or magnesium. It is required for an interaction between MukE and MukB.

The protein resides in the cytoplasm. The protein localises to the nucleoid. In terms of biological role, involved in chromosome condensation, segregation and cell cycle progression. May participate in facilitating chromosome segregation by condensation DNA from both sides of a centrally located replisome during cell division. Not required for mini-F plasmid partitioning. Probably acts via its interaction with MukB and MukE. Overexpression results in anucleate cells. It has a calcium binding activity. This chain is Chromosome partition protein MukF, found in Salmonella agona (strain SL483).